A 274-amino-acid chain; its full sequence is 2,3,4,5-tetrahydropyridine-2,6-dicarboxylate N-succinyltransferase (274 aa).

Residues arginine 104 and aspartate 141 each coordinate substrate.

Belongs to the transferase hexapeptide repeat family. As to quaternary structure, homotrimer.

It localises to the cytoplasm. It catalyses the reaction (S)-2,3,4,5-tetrahydrodipicolinate + succinyl-CoA + H2O = (S)-2-succinylamino-6-oxoheptanedioate + CoA. The protein operates within amino-acid biosynthesis; L-lysine biosynthesis via DAP pathway; LL-2,6-diaminopimelate from (S)-tetrahydrodipicolinate (succinylase route): step 1/3. This chain is 2,3,4,5-tetrahydropyridine-2,6-dicarboxylate N-succinyltransferase, found in Yersinia enterocolitica serotype O:8 / biotype 1B (strain NCTC 13174 / 8081).